A 159-amino-acid polypeptide reads, in one-letter code: Transcription elongation factor GreA (159 aa).

The stretch at 7–72 forms a coiled coil; the sequence is MTVRGAEKLR…IQEIESKLSN (66 aa).

Belongs to the GreA/GreB family.

Necessary for efficient RNA polymerase transcription elongation past template-encoded arresting sites. The arresting sites in DNA have the property of trapping a certain fraction of elongating RNA polymerases that pass through, resulting in locked ternary complexes. Cleavage of the nascent transcript by cleavage factors such as GreA or GreB allows the resumption of elongation from the new 3'terminus. GreA releases sequences of 2 to 3 nucleotides. The protein is Transcription elongation factor GreA of Buchnera aphidicola subsp. Schizaphis graminum (strain Sg).